The sequence spans 238 residues: Probable tetraspanin tspC (238 aa).

Residues 1-16 (MVNTRDFLPKTTHYLK) are Cytoplasmic-facing. A helical transmembrane segment spans residues 17-37 (VPIIGLNAILWLLGLVLIVVG). Over 38–69 (SVCISFFSNFKEFTKESGYKNALSNLTTSAPT) the chain is Extracellular. Asparagine 62 carries N-linked (GlcNAc...) asparagine glycosylation. The chain crosses the membrane as a helical span at residues 70–90 (GVLVIGIFFILLTLVGCFVAY). The Cytoplasmic segment spans residues 91-93 (KEK). Residues 94–114 (LVGLVLYTMLMLILLVVLIGI) form a helical membrane-spanning segment. At 115 to 197 (GGKALTLDKE…GIFTKQVSSK (83 aa)) the chain is on the extracellular side. N-linked (GlcNAc...) asparagine glycosylation is found at asparagine 143 and asparagine 164. The chain crosses the membrane as a helical span at residues 198-218 (LVLVGIAGVVIGCIEFVAMAL). Over 219-238 (SLFLIIRICRSPRSRAYDQY) the chain is Cytoplasmic.

This sequence belongs to the tetraspanin (TM4SF) family.

It localises to the membrane. This is Probable tetraspanin tspC (tspC) from Dictyostelium discoideum (Social amoeba).